Consider the following 213-residue polypeptide: uncharacterized protein (213 aa).

The segment covering 1-14 (MSSDVLVTTPAQRQ) has biased composition (polar residues). A disordered region spans residues 1-26 (MSSDVLVTTPAQRQTEPHAEAVSRNR). In terms of domain architecture, HTH tetR-type spans 29–89 (QATFRKVLAA…EVYLDLVRQV (61 aa)).

This is an uncharacterized protein from Mycobacterium tuberculosis (strain CDC 1551 / Oshkosh).